We begin with the raw amino-acid sequence, 202 residues long: Adenylyl-sulfate kinase (202 aa).

Residue Gly-35–Ser-42 coordinates ATP. Ser-109 functions as the Phosphoserine intermediate in the catalytic mechanism.

The protein belongs to the APS kinase family.

It carries out the reaction adenosine 5'-phosphosulfate + ATP = 3'-phosphoadenylyl sulfate + ADP + H(+). It participates in sulfur metabolism; hydrogen sulfide biosynthesis; sulfite from sulfate: step 2/3. Functionally, catalyzes the synthesis of activated sulfate. The sequence is that of Adenylyl-sulfate kinase from Bacteroides fragilis (strain YCH46).